A 310-amino-acid chain; its full sequence is Tagatose-6-phosphate kinase (310 aa).

This sequence belongs to the carbohydrate kinase PfkB family. LacC subfamily.

The enzyme catalyses D-tagatofuranose 6-phosphate + ATP = D-tagatofuranose 1,6-bisphosphate + ADP + H(+). It functions in the pathway carbohydrate metabolism; D-tagatose 6-phosphate degradation; D-glyceraldehyde 3-phosphate and glycerone phosphate from D-tagatose 6-phosphate: step 1/2. The sequence is that of Tagatose-6-phosphate kinase from Staphylococcus aureus (strain USA300 / TCH1516).